Reading from the N-terminus, the 420-residue chain is Serine hydroxymethyltransferase (420 aa).

Residues Leu-121 and 125 to 127 (GHL) each bind (6S)-5,6,7,8-tetrahydrofolate. N6-(pyridoxal phosphate)lysine is present on Lys-229.

This sequence belongs to the SHMT family. As to quaternary structure, homodimer. Requires pyridoxal 5'-phosphate as cofactor.

It is found in the cytoplasm. The enzyme catalyses (6R)-5,10-methylene-5,6,7,8-tetrahydrofolate + glycine + H2O = (6S)-5,6,7,8-tetrahydrofolate + L-serine. Its pathway is one-carbon metabolism; tetrahydrofolate interconversion. It functions in the pathway amino-acid biosynthesis; glycine biosynthesis; glycine from L-serine: step 1/1. Catalyzes the reversible interconversion of serine and glycine with tetrahydrofolate (THF) serving as the one-carbon carrier. This reaction serves as the major source of one-carbon groups required for the biosynthesis of purines, thymidylate, methionine, and other important biomolecules. Also exhibits THF-independent aldolase activity toward beta-hydroxyamino acids, producing glycine and aldehydes, via a retro-aldol mechanism. In Glaesserella parasuis serovar 5 (strain SH0165) (Haemophilus parasuis), this protein is Serine hydroxymethyltransferase.